The following is a 611-amino-acid chain: Leucine aminopeptidase (611 aa).

Residues 129–131 (QCQ) and 278–282 (GGMEN) each bind substrate. Zn(2+) is bound at residue H305. The Proton acceptor role is filled by E306. Zn(2+) is bound by residues H309 and E328. Residue Y393 is the Proton donor of the active site. 562–564 (RMK) is a binding site for substrate.

The protein belongs to the peptidase M1 family. It depends on Zn(2+) as a cofactor.

The protein localises to the cytoplasm. The catalysed reaction is an epoxide + H2O = an ethanediol. Aminopeptidase that preferentially cleaves di- and tripeptides. Also has low epoxide hydrolase activity (in vitro). Can hydrolyze the epoxide leukotriene LTA(4) but it forms preferentially 5,6-dihydroxy-7,9,11,14-eicosatetraenoic acid rather than the cytokine leukotriene B(4) as the product compared to the homologous mammalian enzyme (in vitro). This chain is Leucine aminopeptidase (LKHA4), found in Oryza sativa subsp. japonica (Rice).